A 519-amino-acid chain; its full sequence is Amphoterin-induced protein 2 (519 aa).

Positions Met1–Gly38 are cleaved as a signal peptide. The LRRNT domain occupies Met39–Arg67. Residues Met39–Thr397 lie on the Extracellular side of the membrane. Cystine bridges form between Cys40-Cys46 and Cys44-Cys53. N-linked (GlcNAc...) asparagine glycosylation is present at Asn57. LRR repeat units lie at residues Leu68–Val89, Lys93–Thr114, Asn117–Glu138, Ala141–Gly162, His165–Gly186, and Asp192–Leu213. A glycan (N-linked (GlcNAc...) asparagine) is linked at Asn103. Positions Asn227 to Tyr283 constitute an LRRCT domain. Cystine bridges form between Cys231–Cys259 and Cys233–Cys281. 7 N-linked (GlcNAc...) asparagine glycosylation sites follow: Asn280, Asn287, Asn344, Asn372, Asn380, Asn383, and Asn387. The region spanning Gly288–Met378 is the Ig-like C2-type domain. Cys309 and Cys362 form a disulfide bridge. A helical membrane pass occupies residues Ala398–Leu418. The Cytoplasmic portion of the chain corresponds to Thr419 to Thr519. The disordered stretch occupies residues Arg498–Thr519.

The protein belongs to the immunoglobulin superfamily. AMIGO family. Binds itself as well as AMIGO1 and AMIGO3. As to expression, highest level in cerebellum, retina, liver, and lung. Lower levels in cerebrum, kidney, small intestine, spleen and testis.

The protein localises to the cell membrane. It is found in the nucleus. In terms of biological role, required for depolarization-dependent survival of cultured cerebellar granule neurons. May mediate homophilic as well as heterophilic cell-cell interaction with AMIGO1 or AMIGO3. May contribute to signal transduction through its intracellular domain. In Mus musculus (Mouse), this protein is Amphoterin-induced protein 2.